An 874-amino-acid chain; its full sequence is Alanine--tRNA ligase (874 aa).

Zn(2+) contacts are provided by H562, H566, C665, and H669.

Belongs to the class-II aminoacyl-tRNA synthetase family. Zn(2+) serves as cofactor.

It localises to the cytoplasm. It catalyses the reaction tRNA(Ala) + L-alanine + ATP = L-alanyl-tRNA(Ala) + AMP + diphosphate. Catalyzes the attachment of alanine to tRNA(Ala) in a two-step reaction: alanine is first activated by ATP to form Ala-AMP and then transferred to the acceptor end of tRNA(Ala). Also edits incorrectly charged Ser-tRNA(Ala) and Gly-tRNA(Ala) via its editing domain. The protein is Alanine--tRNA ligase of Pseudomonas fluorescens (strain Pf0-1).